Consider the following 834-residue polypeptide: DNA gyrase subunit A (834 aa).

Residues 34–500 (LPDIRDGLKP…ADDIRDIEDI (467 aa)) enclose the Topo IIA-type catalytic domain. The O-(5'-phospho-DNA)-tyrosine intermediate role is filled by tyrosine 122. Residues 527-533 (QRRGGHG) carry the GyrA-box motif. Residues 810-834 (LSSNENDDEVLSGSEEECSDTVSLR) form a disordered region. Residues 814 to 828 (ENDDEVLSGSEEECS) are compositionally biased toward acidic residues.

Belongs to the type II topoisomerase GyrA/ParC subunit family. In terms of assembly, heterotetramer, composed of two GyrA and two GyrB chains. In the heterotetramer, GyrA contains the active site tyrosine that forms a transient covalent intermediate with DNA, while GyrB binds cofactors and catalyzes ATP hydrolysis.

It localises to the cytoplasm. It catalyses the reaction ATP-dependent breakage, passage and rejoining of double-stranded DNA.. In terms of biological role, a type II topoisomerase that negatively supercoils closed circular double-stranded (ds) DNA in an ATP-dependent manner to modulate DNA topology and maintain chromosomes in an underwound state. Negative supercoiling favors strand separation, and DNA replication, transcription, recombination and repair, all of which involve strand separation. Also able to catalyze the interconversion of other topological isomers of dsDNA rings, including catenanes and knotted rings. Type II topoisomerases break and join 2 DNA strands simultaneously in an ATP-dependent manner. The protein is DNA gyrase subunit A of Chlamydia pneumoniae (Chlamydophila pneumoniae).